Consider the following 677-residue polypeptide: UvrABC system protein B (677 aa).

The Helicase ATP-binding domain maps to 24 to 412 (EGVLQGVPAQ…EGIVVEQVIR (389 aa)). 37-44 (GVTGSGKT) contributes to the ATP binding site. Positions 90 to 113 (YYDYYQPEAYLPNSDTYIEKDLAI) match the Beta-hairpin motif. Positions 429–591 (QIDDLMEEIQ…ITPQQIKKAR (163 aa)) constitute a Helicase C-terminal domain. The UVR domain maps to 636 to 671 (EKSIERTRKLMQEAAKKLEFIEAAQYRNELLKLEDL).

This sequence belongs to the UvrB family. Forms a heterotetramer with UvrA during the search for lesions. Interacts with UvrC in an incision complex.

The protein resides in the cytoplasm. In terms of biological role, the UvrABC repair system catalyzes the recognition and processing of DNA lesions. A damage recognition complex composed of 2 UvrA and 2 UvrB subunits scans DNA for abnormalities. Upon binding of the UvrA(2)B(2) complex to a putative damaged site, the DNA wraps around one UvrB monomer. DNA wrap is dependent on ATP binding by UvrB and probably causes local melting of the DNA helix, facilitating insertion of UvrB beta-hairpin between the DNA strands. Then UvrB probes one DNA strand for the presence of a lesion. If a lesion is found the UvrA subunits dissociate and the UvrB-DNA preincision complex is formed. This complex is subsequently bound by UvrC and the second UvrB is released. If no lesion is found, the DNA wraps around the other UvrB subunit that will check the other stand for damage. This chain is UvrABC system protein B, found in Bacteroides thetaiotaomicron (strain ATCC 29148 / DSM 2079 / JCM 5827 / CCUG 10774 / NCTC 10582 / VPI-5482 / E50).